The chain runs to 362 residues: Histidinol-phosphate aminotransferase 2 (362 aa).

Position 222 is an N6-(pyridoxal phosphate)lysine (Lys-222).

Belongs to the class-II pyridoxal-phosphate-dependent aminotransferase family. Histidinol-phosphate aminotransferase subfamily. As to quaternary structure, homodimer. Pyridoxal 5'-phosphate serves as cofactor.

It catalyses the reaction L-histidinol phosphate + 2-oxoglutarate = 3-(imidazol-4-yl)-2-oxopropyl phosphate + L-glutamate. The protein operates within amino-acid biosynthesis; L-histidine biosynthesis; L-histidine from 5-phospho-alpha-D-ribose 1-diphosphate: step 7/9. The polypeptide is Histidinol-phosphate aminotransferase 2 (Carboxydothermus hydrogenoformans (strain ATCC BAA-161 / DSM 6008 / Z-2901)).